The chain runs to 616 residues: Dihydroxy-acid dehydratase (616 aa).

Residue D81 participates in Mg(2+) binding. C122 is a [2Fe-2S] cluster binding site. Mg(2+) is bound by residues D123 and K124. K124 is modified (N6-carboxylysine). C195 provides a ligand contact to [2Fe-2S] cluster. E491 provides a ligand contact to Mg(2+). The active-site Proton acceptor is S517.

Belongs to the IlvD/Edd family. As to quaternary structure, homodimer. The cofactor is [2Fe-2S] cluster. Mg(2+) serves as cofactor.

It catalyses the reaction (2R)-2,3-dihydroxy-3-methylbutanoate = 3-methyl-2-oxobutanoate + H2O. The enzyme catalyses (2R,3R)-2,3-dihydroxy-3-methylpentanoate = (S)-3-methyl-2-oxopentanoate + H2O. It functions in the pathway amino-acid biosynthesis; L-isoleucine biosynthesis; L-isoleucine from 2-oxobutanoate: step 3/4. It participates in amino-acid biosynthesis; L-valine biosynthesis; L-valine from pyruvate: step 3/4. Its function is as follows. Functions in the biosynthesis of branched-chain amino acids. Catalyzes the dehydration of (2R,3R)-2,3-dihydroxy-3-methylpentanoate (2,3-dihydroxy-3-methylvalerate) into 2-oxo-3-methylpentanoate (2-oxo-3-methylvalerate) and of (2R)-2,3-dihydroxy-3-methylbutanoate (2,3-dihydroxyisovalerate) into 2-oxo-3-methylbutanoate (2-oxoisovalerate), the penultimate precursor to L-isoleucine and L-valine, respectively. This Escherichia coli (strain SMS-3-5 / SECEC) protein is Dihydroxy-acid dehydratase.